Consider the following 209-residue polypeptide: Uridine kinase (209 aa).

Residue 12 to 19 participates in ATP binding; that stretch reads GGSGSGKT.

This sequence belongs to the uridine kinase family.

Its subcellular location is the cytoplasm. The enzyme catalyses uridine + ATP = UMP + ADP + H(+). It catalyses the reaction cytidine + ATP = CMP + ADP + H(+). It functions in the pathway pyrimidine metabolism; CTP biosynthesis via salvage pathway; CTP from cytidine: step 1/3. The protein operates within pyrimidine metabolism; UMP biosynthesis via salvage pathway; UMP from uridine: step 1/1. This Listeria monocytogenes serotype 4b (strain CLIP80459) protein is Uridine kinase.